Reading from the N-terminus, the 69-residue chain is uncharacterized protein (69 aa).

Positions 21–64 (LNLLKGGEEKISEVELKLDEMEKKMDSLLVQLEDLHRDNNDLAK) form a coiled coil.

This is an uncharacterized protein from Saccharomyces cerevisiae (strain ATCC 204508 / S288c) (Baker's yeast).